Here is a 241-residue protein sequence, read N- to C-terminus: Demethylmenaquinone methyltransferase (241 aa).

Residues Thr68, Asp88, and Asp114 to Ala115 each bind S-adenosyl-L-methionine.

The protein belongs to the class I-like SAM-binding methyltransferase superfamily. MenG/UbiE family.

The enzyme catalyses a 2-demethylmenaquinol + S-adenosyl-L-methionine = a menaquinol + S-adenosyl-L-homocysteine + H(+). The protein operates within quinol/quinone metabolism; menaquinone biosynthesis; menaquinol from 1,4-dihydroxy-2-naphthoate: step 2/2. Its function is as follows. Methyltransferase required for the conversion of demethylmenaquinol (DMKH2) to menaquinol (MKH2). This Deinococcus radiodurans (strain ATCC 13939 / DSM 20539 / JCM 16871 / CCUG 27074 / LMG 4051 / NBRC 15346 / NCIMB 9279 / VKM B-1422 / R1) protein is Demethylmenaquinone methyltransferase.